A 430-amino-acid polypeptide reads, in one-letter code: Alpha-humulene synthase asR6 (430 aa).

Belongs to the terpene synthase family. Alpha-humulene synthase eupE subfamily. The cofactor is Mg(2+).

It catalyses the reaction (2E,6E)-farnesyl diphosphate = alpha-humulene + diphosphate. It participates in secondary metabolite biosynthesis; terpenoid biosynthesis. Alpha-humulene synthase; part of the gene cluster that mediates the biosynthesis of xenovulene A, an unusual meroterpenoid that has potent inhibitory effects on the human gamma-aminobutyrate A (GABAA) benzodiazepine receptor. The first step of xenovulene A biosynthesis is the biosynthesis of 3-methylorcinaldehyde performed by the non-reducing polyketide synthase aspks1. The salicylate hydroxylase asL1 then catalyzes the oxidative dearomatization of 3-methylorcinaldehyde to yield a dearomatized hydroxycyclohexadione. The 2-oxoglutarate-dependent dioxygenase asL3 further catalyzes the oxidative ring expansion to provide the first tropolone metabolite. The cytochrome P450 monooxygenase asR2 allows the synthesis of tropolone hemiacetal. In parallel, a previously unrecognised class of terpene cyclase, asR6, produces alpha-humulene from farnesylpyrophosphate (FPP). The putative Diels-Alderase asR5 probably catalyzes the formation of the tropolone-humulene skeleton by linking humulene and the polyketide moiety. Oxidative-ring contractions catalyzed by asL4 and asL6 then processively remove carbon atoms from the polyketide to yield xenovulene A. The sequence is that of Alpha-humulene synthase asR6 from Sarocladium schorii (Acremonium strictum (strain IMI 501407)).